Consider the following 268-residue polypeptide: L-gamma-glutamyl-L-propargylglycine hydroxylase (268 aa).

Requires Fe(2+) as cofactor.

It catalyses the reaction L-gamma-glutamyl-L-propargylglycine + 2-oxoglutarate + O2 = L-gamma-glutamyl-(3R)-L-beta-ethynylserine + succinate + CO2. It participates in amino-acid metabolism. The protein operates within antibiotic biosynthesis. Its function is as follows. Involved in the biosynthesis of terminal alkyne-containing amino acids such as L-beta-ethynylserine, that are produced as antibiotics by S.cattleya. Catalyzes the hydroxylation of the dipeptide L-gamma-glutamyl-L-propargylglycine, leading to L-gamma-glutamyl-L-beta-ethynylserine. Cannot use L-propargylglycine as substrate. This chain is L-gamma-glutamyl-L-propargylglycine hydroxylase, found in Streptantibioticus cattleyicolor (strain ATCC 35852 / DSM 46488 / JCM 4925 / NBRC 14057 / NRRL 8057) (Streptomyces cattleya).